The primary structure comprises 202 residues: MAGSFAQLAKNAEKKKPSISVSKEPVENPPLKVYQLGDEALRTPANRIVKVDDAIRKLAKDMLITMYSSKGIGLAAPQVGIQKRLLVIDLKFEDPNSPPMVFINPEIISSSATLDTYEEGCLSIPGVYLNVLRPSSIKLSYRDEMGRPKKMNADGLMARCIQHEIDHLNGVCFVDKVTDEEELKKQLNENNFKRSDVIKETN.

The tract at residues 1-24 (MAGSFAQLAKNAEKKKPSISVSKE) is disordered. Residues Cys-121 and His-163 each contribute to the Fe cation site. Glu-164 is a catalytic residue. His-167 contributes to the Fe cation binding site.

The protein belongs to the polypeptide deformylase family. The cofactor is Fe(2+).

It carries out the reaction N-terminal N-formyl-L-methionyl-[peptide] + H2O = N-terminal L-methionyl-[peptide] + formate. Its function is as follows. Removes the formyl group from the N-terminal Met of newly synthesized proteins. Requires at least a dipeptide for an efficient rate of reaction. N-terminal L-methionine is a prerequisite for activity but the enzyme has broad specificity at other positions. In Prochlorococcus marinus (strain NATL2A), this protein is Peptide deformylase.